We begin with the raw amino-acid sequence, 274 residues long: 4-hydroxy-tetrahydrodipicolinate reductase (274 aa).

NAD(+) contacts are provided by residues 8–13 (GALGRM), E34, 102–104 (GTT), and 128–131 (SQNF). H160 functions as the Proton donor/acceptor in the catalytic mechanism. H161 serves as a coordination point for (S)-2,3,4,5-tetrahydrodipicolinate. The active-site Proton donor is the K164. 170-171 (GT) contributes to the (S)-2,3,4,5-tetrahydrodipicolinate binding site.

This sequence belongs to the DapB family.

It localises to the cytoplasm. It catalyses the reaction (S)-2,3,4,5-tetrahydrodipicolinate + NAD(+) + H2O = (2S,4S)-4-hydroxy-2,3,4,5-tetrahydrodipicolinate + NADH + H(+). It carries out the reaction (S)-2,3,4,5-tetrahydrodipicolinate + NADP(+) + H2O = (2S,4S)-4-hydroxy-2,3,4,5-tetrahydrodipicolinate + NADPH + H(+). It participates in amino-acid biosynthesis; L-lysine biosynthesis via DAP pathway; (S)-tetrahydrodipicolinate from L-aspartate: step 4/4. In terms of biological role, catalyzes the conversion of 4-hydroxy-tetrahydrodipicolinate (HTPA) to tetrahydrodipicolinate. The chain is 4-hydroxy-tetrahydrodipicolinate reductase from Methanocaldococcus jannaschii (strain ATCC 43067 / DSM 2661 / JAL-1 / JCM 10045 / NBRC 100440) (Methanococcus jannaschii).